Reading from the N-terminus, the 2214-residue chain is Non-reducing polyketide synthase dpmpA (2214 aa).

Positions 75–178 (EWIRTGDSHV…LAVCAGAWKD (104 aa)) are N-terminal acylcarrier protein transacylase domain (SAT). The 413-residue stretch at 372 to 784 (DESIAIVGAS…GNNTAMIVCQ (413 aa)) folds into the Ketosynthase family 3 (KS3) domain. Active-site for beta-ketoacyl synthase activity residues include cysteine 532, histidine 667, and histidine 707. The malonyl-CoA:ACP transacylase (MAT) domain stretch occupies residues 888 to 1184 (VFAGQTGHRP…AFLSARLGSP (297 aa)). Serine 974 serves as the catalytic For acyl/malonyl transferase activity. The interval 1255 to 1389 (PQLVSVVRSS…GIIKSQEQDR (135 aa)) is N-terminal hotdog fold. One can recognise a PKS/mFAS DH domain in the interval 1255–1566 (PQLVSVVRSS…FSKVPVRSLQ (312 aa)). The product template (PT) domain stretch occupies residues 1265–1560 (GGADPEAAEF…AILGARFSKV (296 aa)). Residues 1416–1566 (GASVVQGAFV…FSKVPVRSLQ (151 aa)) form a C-terminal hotdog fold region. 2 consecutive Carrier domains span residues 1620-1695 (NEVK…HSRL) and 1722-1802 (KAST…SGAD). The residue at position 1654 (serine 1654) is an O-(pantetheine 4'-phosphoryl)serine. A disordered region spans residues 1698–1728 (VPQLSPHDTDRSSDLSAGQPPSTPKASTQEQ). A compositionally biased stretch (polar residues) spans 1711 to 1726 (DLSAGQPPSTPKASTQ). An O-(pantetheine 4'-phosphoryl)serine modification is found at serine 1762. Residues 1805–1827 (GFPRTSDNRRSEEGSVGHVGPEK) form a disordered region. The segment covering 1810-1827 (SDNRRSEEGSVGHVGPEK) has biased composition (basic and acidic residues). The tract at residues 1958–2210 (FPAYRPDHRL…SREADLFRWI (253 aa)) is methyltransferase (CMeT) domain.

It participates in secondary metabolite biosynthesis; terpenoid biosynthesis. Its function is as follows. Non-reducing polyketide synthase; part of the gene cluster that mediates the biosynthesis of diterpenoid pyrones. The first step of the pathway is the synthesis of the alpha-pyrone moiety by the polyketide synthase dpmpA via condensation of one acetyl-CoA starter unit with 3 malonyl-CoA units and 2 methylations. The alpha-pyrone is then combined with geranylgeranyl pyrophosphate (GGPP) formed by the GGPP synthase dpmpD through the action of the prenyltransferase dpmpC to yield a linear alpha-pyrone diterpenoid. Subsequent steps in the diterpenoid pyrone biosynthetic pathway involve the decalin core formation, which is initiated by the epoxidation of the C10-C11 olefin by the FAD-dependent oxidoreductase dpmpE, and is followed by a cyclization cascade catalyzed by the terpene cyclase dpmpB. The short chain dehydrogenase/reductase dpmpG then oxidizes the 8S hydroxy group to a ketone and the short chain dehydrogenase/reductase dpmpH reduces the ketone to the 8R hydroxy group to yield higginsianin B. Higginsianin B is further methylated by the methyltransferase dpmpI to produce the intermediate named FDDP B. The cytochrome P450 monooxygenase dpmpJ then oxidizes the C-26 methyl to primary alcohol, producing the final diterpenoid pyrone with a C-26 primary alcohol on the gamma-pyrone moiety named FDDP C. The polypeptide is Non-reducing polyketide synthase dpmpA (Macrophomina phaseolina (strain MS6) (Charcoal rot fungus)).